A 346-amino-acid polypeptide reads, in one-letter code: Tetraacyldisaccharide 4'-kinase (346 aa).

53–60 (TCGGTGKT) contributes to the ATP binding site.

It belongs to the LpxK family.

The enzyme catalyses a lipid A disaccharide + ATP = a lipid IVA + ADP + H(+). The protein operates within glycolipid biosynthesis; lipid IV(A) biosynthesis; lipid IV(A) from (3R)-3-hydroxytetradecanoyl-[acyl-carrier-protein] and UDP-N-acetyl-alpha-D-glucosamine: step 6/6. Its function is as follows. Transfers the gamma-phosphate of ATP to the 4'-position of a tetraacyldisaccharide 1-phosphate intermediate (termed DS-1-P) to form tetraacyldisaccharide 1,4'-bis-phosphate (lipid IVA). This chain is Tetraacyldisaccharide 4'-kinase, found in Bartonella tribocorum (strain CIP 105476 / IBS 506).